The following is an 898-amino-acid chain: Vacuolar protein sorting-associated protein 41 homolog (898 aa).

A compositionally biased stretch (basic and acidic residues) spans 1–10 (MDESNDKENE). A disordered region spans residues 1 to 35 (MDESNDKENEFGDSFLEDSGDITRTTEDEDEAPLE). The CHCR repeat unit spans residues 614-756 (LRLLLDNADS…VADFPTHFSQ (143 aa)). The RING-type; atypical zinc-finger motif lies at 835 to 890 (CSLCSQVIMNTGQDMIPRKFNDIKVFKCGHIFHLTCSASEIDRRQMIEDGICIACS).

This sequence belongs to the VPS41 family. In terms of assembly, probable component of the homotypic fusion and vacuole protein sorting (HOPS) complex consisting of the core class C Vps proteins vps-11, vps-16, vps-18, and which further associates with vps-33.1, vps-39 and vps-41.

It localises to the endosome membrane. It is found in the late endosome. The protein resides in the lysosome. The protein localises to the golgi apparatus. Its subcellular location is the trans-Golgi network. It localises to the early endosome. It is found in the cytoplasmic vesicle. The protein resides in the clathrin-coated vesicle. In terms of biological role, plays a role in vesicle-mediated protein trafficking to lysosomal compartments including the endocytic membrane transport pathways. Believed to act in part as a core component of the putative HOPS endosomal tethering complex which is proposed to be involved in the rab-5-to-rab-7 endosome conversion probably implicating sand-1, and via binding SNAREs and SNARE complexes to mediate tethering and docking events during SNARE-mediated membrane fusion. The HOPS complex is proposed to be recruited to rab-7 on the late endosomal membrane and to regulate late endocytic, phagocytic and autophagic traffic towards lysosomes. Within the HOPS complex, contributes to the normal development of gut granules in the adult intestine. May mediate the tethering of autophagosomes with lysosomes. Has a role in the negative regulation of apoptosis. Required for uptake of exogenous dsRNA which is used in experimental RNA silencing. In Caenorhabditis briggsae, this protein is Vacuolar protein sorting-associated protein 41 homolog.